Consider the following 118-residue polypeptide: Large ribosomal subunit protein bL19 (118 aa).

The protein belongs to the bacterial ribosomal protein bL19 family.

In terms of biological role, this protein is located at the 30S-50S ribosomal subunit interface and may play a role in the structure and function of the aminoacyl-tRNA binding site. This is Large ribosomal subunit protein bL19 from Buchnera aphidicola subsp. Baizongia pistaciae (strain Bp).